The sequence spans 94 residues: Antifungal protein (94 aa).

A signal peptide spans 1–21 (MKFVSLASLGFALVAALGAVA). A propeptide spanning residues 22–43 (TPVEADSLTAGGLDARDESAVL) is cleaved from the precursor. 4 cysteine pairs are disulfide-bonded: Cys-50–Cys-76, Cys-57–Cys-83, Cys-69–Cys-71, and Cys-92–Cys-94.

The protein belongs to the antifungal protein pafB family.

It is found in the secreted. Its subcellular location is the host cytoplasm. Functionally, antifungal protein that acts as an inhibitor of growth of a variety of fungal species. This Aspergillus giganteus protein is Antifungal protein (afp).